Reading from the N-terminus, the 150-residue chain is Ribonuclease pancreatic (150 aa).

Residues 1–26 (MALKSLVLLSLLVLVLLLVRVQPSLG) form the signal peptide. N-linked (Glc) (glycation) lysine; in vitro glycans are attached at residues K27 and K33. Residues K33 and R36 each coordinate substrate. H38 acts as the Proton acceptor in catalysis. 4 disulfides stabilise this stretch: C52–C110, C66–C121, C84–C136, and C91–C98. Residue N60 is glycosylated (N-linked (GlcNAc...) asparagine; partial). 2 N-linked (Glc) (glycation) lysine; in vitro glycosylation sites follow: K63 and K67. Substrate contacts are provided by residues 67–71 (KPVNT), K92, and R111. H145 serves as the catalytic Proton donor.

It belongs to the pancreatic ribonuclease family. As to quaternary structure, interacts with and forms tight 1:1 complexes with RNH1. Dimerization of two such complexes may occur. Interaction with RNH1 inhibits this protein. Monomer. Pancreas.

The protein resides in the secreted. It carries out the reaction an [RNA] containing cytidine + H2O = an [RNA]-3'-cytidine-3'-phosphate + a 5'-hydroxy-ribonucleotide-3'-[RNA].. It catalyses the reaction an [RNA] containing uridine + H2O = an [RNA]-3'-uridine-3'-phosphate + a 5'-hydroxy-ribonucleotide-3'-[RNA].. In terms of biological role, endonuclease that catalyzes the cleavage of RNA on the 3' side of pyrimidine nucleotides. Acts on single-stranded and double-stranded RNA. In Bos taurus (Bovine), this protein is Ribonuclease pancreatic (RNASE1).